A 267-amino-acid chain; its full sequence is 4-hydroxy-tetrahydrodipicolinate reductase (267 aa).

NAD(+) is bound by residues G8 to M13, E34, G98 to T100, and S122 to M125. The active-site Proton donor/acceptor is the H155. H156 is a binding site for (S)-2,3,4,5-tetrahydrodipicolinate. Residue K159 is the Proton donor of the active site. G165–T166 contacts (S)-2,3,4,5-tetrahydrodipicolinate.

It belongs to the DapB family.

Its subcellular location is the cytoplasm. The catalysed reaction is (S)-2,3,4,5-tetrahydrodipicolinate + NAD(+) + H2O = (2S,4S)-4-hydroxy-2,3,4,5-tetrahydrodipicolinate + NADH + H(+). The enzyme catalyses (S)-2,3,4,5-tetrahydrodipicolinate + NADP(+) + H2O = (2S,4S)-4-hydroxy-2,3,4,5-tetrahydrodipicolinate + NADPH + H(+). The protein operates within amino-acid biosynthesis; L-lysine biosynthesis via DAP pathway; (S)-tetrahydrodipicolinate from L-aspartate: step 4/4. In terms of biological role, catalyzes the conversion of 4-hydroxy-tetrahydrodipicolinate (HTPA) to tetrahydrodipicolinate. This Syntrophobacter fumaroxidans (strain DSM 10017 / MPOB) protein is 4-hydroxy-tetrahydrodipicolinate reductase.